A 423-amino-acid chain; its full sequence is Zinc finger and BTB domain-containing protein 6 (423 aa).

The region spanning 33–97 is the BTB domain; the sequence is CDVSIYINDT…CYTGALEVKR (65 aa). Ser201 is subject to Phosphoserine. 4 C2H2-type zinc fingers span residues 300 to 322, 325 to 347, 353 to 375, and 381 to 404; these read HQCP…LKMH, FLCL…IRGH, FQCT…LNIH, and YKCH…TSVH.

The protein resides in the nucleus. Its function is as follows. May be involved in transcriptional regulation. The polypeptide is Zinc finger and BTB domain-containing protein 6 (Zbtb6) (Mus musculus (Mouse)).